A 195-amino-acid chain; its full sequence is Imidazole glycerol phosphate synthase subunit HisH 2 (195 aa).

The Glutamine amidotransferase type-1 domain occupies 2-195 (KIIIIDTACA…LISNFIKDIG (194 aa)). The active-site Nucleophile is C77. Active-site residues include H175 and E177.

As to quaternary structure, heterodimer of HisH and HisF.

The protein resides in the cytoplasm. The catalysed reaction is 5-[(5-phospho-1-deoxy-D-ribulos-1-ylimino)methylamino]-1-(5-phospho-beta-D-ribosyl)imidazole-4-carboxamide + L-glutamine = D-erythro-1-(imidazol-4-yl)glycerol 3-phosphate + 5-amino-1-(5-phospho-beta-D-ribosyl)imidazole-4-carboxamide + L-glutamate + H(+). It carries out the reaction L-glutamine + H2O = L-glutamate + NH4(+). It functions in the pathway amino-acid biosynthesis; L-histidine biosynthesis; L-histidine from 5-phospho-alpha-D-ribose 1-diphosphate: step 5/9. Functionally, IGPS catalyzes the conversion of PRFAR and glutamine to IGP, AICAR and glutamate. The HisH subunit provides the glutamine amidotransferase activity that produces the ammonia necessary to HisF for the synthesis of IGP and AICAR. This chain is Imidazole glycerol phosphate synthase subunit HisH 2 (hisH2), found in Campylobacter jejuni subsp. jejuni serotype O:2 (strain ATCC 700819 / NCTC 11168).